A 140-amino-acid polypeptide reads, in one-letter code: Small ribosomal subunit protein uS19 (140 aa).

The protein belongs to the universal ribosomal protein uS19 family.

Functionally, protein S19 forms a complex with S13 that binds strongly to the 16S ribosomal RNA. The chain is Small ribosomal subunit protein uS19 from Metallosphaera sedula (strain ATCC 51363 / DSM 5348 / JCM 9185 / NBRC 15509 / TH2).